We begin with the raw amino-acid sequence, 300 residues long: Flaviolin linalyltransferase (300 aa).

The protein belongs to the aromatic prenyltransferase family. In terms of assembly, monomer.

The enzyme catalyses flaviolin + (2E)-geranyl diphosphate = 3-linalylflaviolin + diphosphate. Its activity is regulated as follows. Does not require magnesium or any other divalent metal ions for activity. In terms of biological role, involved in the biosynthesis of furanonaphthoquinone I (FNQ I). Catalyzes C- and O-prenylations of different phenolic substrates. With flaviolin as substrate, catalyzes the formation of a carbon-carbon-bond between C-3 (rather than C-1) of geranyl diphosphate and C-3 of flaviolin. With 1,3-dihydroxynaphthalene and 4-hydroxybenzoate as substrates, catalyzes O-prenylations. The protein is Flaviolin linalyltransferase of Streptomyces virginiae (Streptomyces cinnamonensis).